An 89-amino-acid polypeptide reads, in one-letter code: Small ribosomal subunit protein uS15 (89 aa).

Belongs to the universal ribosomal protein uS15 family. In terms of assembly, part of the 30S ribosomal subunit. Forms a bridge to the 50S subunit in the 70S ribosome, contacting the 23S rRNA.

Its function is as follows. One of the primary rRNA binding proteins, it binds directly to 16S rRNA where it helps nucleate assembly of the platform of the 30S subunit by binding and bridging several RNA helices of the 16S rRNA. Forms an intersubunit bridge (bridge B4) with the 23S rRNA of the 50S subunit in the ribosome. The chain is Small ribosomal subunit protein uS15 from Clavibacter michiganensis subsp. michiganensis (strain NCPPB 382).